A 301-amino-acid chain; its full sequence is Transcription factor bHLH103 (301 aa).

The KRAB domain occupies 29–106 (PRSAEIVVDF…LEGLFDSSEQ (78 aa)). 2 disordered regions span residues 161-184 (EKSG…ETPS) and 239-272 (TSPH…PRQD). A bHLH domain is found at 180 to 229 (LETPSHFPSFKVRKEKLGDRITALQQLVSPFGKTDTASVLHDAIDYIKFL). Positions 239–269 (TSPHLNSIGSGEQKQWSDKSSNNTHNQNCSP) are enriched in polar residues.

Homodimer. Mature root endodermis.

The protein localises to the nucleus. This is Transcription factor bHLH103 (BHLH103) from Arabidopsis thaliana (Mouse-ear cress).